We begin with the raw amino-acid sequence, 319 residues long: Olfactory receptor 10Q1 (319 aa).

Topologically, residues 1–29 (MPVGKLVFNQSEPTEFVFRAFTTATEFQV) are extracellular. Asn9 is a glycosylation site (N-linked (GlcNAc...) asparagine). Residues 30-50 (LLFLLFLLLYLMILCGNTAII) traverse the membrane as a helical segment. Over 51 to 58 (WVVCTHST) the chain is Cytoplasmic. Residues 59-79 (LRTPMYFFLSNLSFLELCYTT) form a helical membrane-spanning segment. Topologically, residues 80-103 (VVVPLMLSNILGAQKPISLAGCGA) are extracellular. An intrachain disulfide couples Cys101 to Cys194. A helical membrane pass occupies residues 104–124 (QMFFFVTLGSTDCFLLAIMAY). Topologically, residues 125-143 (DRYVAICHPLHYTLIMTRE) are cytoplasmic. Residues 144 to 164 (LCTQMLGGALGLALFPSLQLT) form a helical membrane-spanning segment. Residues 165-202 (ALIFTLPFCGHHQEINHFLCDVPPVLRLACADIRVHQA) are Extracellular-facing. Residues 203-222 (VLYVVSILVLTIPFLLICVS) traverse the membrane as a helical segment. Residues 223-242 (YVFITCAILSIRSAEGRRRA) lie on the Cytoplasmic side of the membrane. Residues 243 to 263 (FSTCSFHLTVVLLQYGCCSLV) form a helical membrane-spanning segment. Residues 264–276 (YLRPRSSTSEDED) lie on the Extracellular side of the membrane. Residues 277 to 297 (SQIALVYTFVTPLLNPLLYSL) traverse the membrane as a helical segment. Residues 298–319 (RNKDVKGALRSAIIRKAASDAN) lie on the Cytoplasmic side of the membrane.

The protein belongs to the G-protein coupled receptor 1 family.

The protein localises to the cell membrane. Functionally, odorant receptor. This Homo sapiens (Human) protein is Olfactory receptor 10Q1 (OR10Q1).